Reading from the N-terminus, the 215-residue chain is Enolase-phosphatase E1 (215 aa).

Mg(2+)-binding residues include Asp11 and Glu13. Residues 117–118 (SS) and Lys151 contribute to the substrate site. Asp174 serves as a coordination point for Mg(2+).

It belongs to the HAD-like hydrolase superfamily. MasA/MtnC family. As to quaternary structure, monomer. Mg(2+) is required as a cofactor.

It is found in the cytoplasm. The protein localises to the nucleus. It catalyses the reaction 5-methylsulfanyl-2,3-dioxopentyl phosphate + H2O = 1,2-dihydroxy-5-(methylsulfanyl)pent-1-en-3-one + phosphate. It functions in the pathway amino-acid biosynthesis; L-methionine biosynthesis via salvage pathway; L-methionine from S-methyl-5-thio-alpha-D-ribose 1-phosphate: step 3/6. It participates in amino-acid biosynthesis; L-methionine biosynthesis via salvage pathway; L-methionine from S-methyl-5-thio-alpha-D-ribose 1-phosphate: step 4/6. Bifunctional enzyme that catalyzes the enolization of 2,3-diketo-5-methylthiopentyl-1-phosphate (DK-MTP-1-P) into the intermediate 2-hydroxy-3-keto-5-methylthiopentenyl-1-phosphate (HK-MTPenyl-1-P), which is then dephosphorylated to form the acireductone 1,2-dihydroxy-3-keto-5-methylthiopentene (DHK-MTPene). The sequence is that of Enolase-phosphatase E1 (utr4) from Schizosaccharomyces japonicus (strain yFS275 / FY16936) (Fission yeast).